Here is a 254-residue protein sequence, read N- to C-terminus: Switch-activating protein 1 (254 aa).

A compositionally biased stretch (basic and acidic residues) spans 1 to 10 (MEAPKMELKS). The interval 1–30 (MEAPKMELKSYKRKNASLSPSSSPAKAQRT) is disordered. Low complexity predominate over residues 16-25 (ASLSPSSSPA). Residues S17 and S19 each carry the phosphoserine modification. Repeat copies occupy residues 221-224 (GVNM), 225-228 (GTNM), 229-232 (GANM), and 233-236 (GANM). The tract at residues 221–236 (GVNMGTNMGANMGANM) is 4 X 4 AA tandem repeats of G-[ATV]-N-M.

Homodimer.

The protein localises to the nucleus. In terms of biological role, binds to sequences required for mating-type switching. Makes a simultaneous contact with both the alpha and beta domains of the switch-activating site SAS1. Also binds to replication fork barrier 1 (RFB1) located within a 78 base pair sequence near the 3' end of the rRNA coding region. This leads to replication fork blockage. It binds the consensus sequence 5'-TA[AG]GCAGNTN[CT]AACG[AC]G-3'. Has a role in chromosome organization and integrity where it is involved in chromosome segregation. Has a role in sister chromatid cohesion and condensation. The polypeptide is Switch-activating protein 1 (sap1) (Schizosaccharomyces pombe (strain 972 / ATCC 24843) (Fission yeast)).